A 153-amino-acid chain; its full sequence is Aspartate carbamoyltransferase regulatory chain (153 aa).

Residues cysteine 109, cysteine 114, cysteine 138, and cysteine 141 each contribute to the Zn(2+) site.

Belongs to the PyrI family. Contains catalytic and regulatory chains. Zn(2+) is required as a cofactor.

Functionally, involved in allosteric regulation of aspartate carbamoyltransferase. This is Aspartate carbamoyltransferase regulatory chain from Edwardsiella ictaluri (strain 93-146).